The chain runs to 283 residues: Quinate/shikimate dehydrogenase (NAD(+)) (283 aa).

Ser17, Thr69, Lys73, Asn94, and Asp110 together coordinate shikimate. L-quinate-binding positions include 17-19 (SRT), Thr69, Lys73, Asn94, and Asp110. Residue Lys73 is the Proton acceptor of the active site. NAD(+) contacts are provided by residues 137 to 138 (GV), Asp158, Arg163, 203 to 206 (PMGM), Ala213, Val228, and Gly251. Gln258 serves as a coordination point for shikimate. Gln258 contacts L-quinate.

This sequence belongs to the shikimate dehydrogenase family. Homodimer.

The catalysed reaction is L-quinate + NAD(+) = 3-dehydroquinate + NADH + H(+). It carries out the reaction shikimate + NAD(+) = 3-dehydroshikimate + NADH + H(+). It functions in the pathway metabolic intermediate biosynthesis; chorismate biosynthesis; chorismate from D-erythrose 4-phosphate and phosphoenolpyruvate: step 4/7. Its pathway is aromatic compound metabolism; 3,4-dihydroxybenzoate biosynthesis; 3-dehydroquinate from D-quinate (NAD(+) route). In terms of biological role, involved in the biosynthesis of the chorismate, which leads to the biosynthesis of aromatic amino acids, and plays a key role in the quinate degradation pathway. Catalyzes the NAD(+)-dependent oxidation of both quinate and shikimate to 3-dehydroquinate and 3-dehydroshikimate, respectively. It can only use NAD. The chain is Quinate/shikimate dehydrogenase (NAD(+)) from Corynebacterium glutamicum (strain ATCC 13032 / DSM 20300 / JCM 1318 / BCRC 11384 / CCUG 27702 / LMG 3730 / NBRC 12168 / NCIMB 10025 / NRRL B-2784 / 534).